Here is a 277-residue protein sequence, read N- to C-terminus: Myelin proteolipid protein (277 aa).

Residues 1-10 (MGLLECCARC) are Cytoplasmic-facing. 3 S-palmitoyl cysteine lipidation sites follow: Cys6, Cys7, and Cys10. Residues 11 to 36 (LVGAPFASLVATGLCFFGVALFCGCG) form a helical membrane-spanning segment. Topologically, residues 37–59 (HEALTGTEKLIETYFSKNYQDYE) are extracellular. Residues 60 to 88 (YLINVIHAFQYVIYGTASFFFLYGALLLA) traverse the membrane as a helical segment. The Cytoplasmic portion of the chain corresponds to 89–151 (EGFYTTGAVR…LGKWLGHPDK (63 aa)). Residue Cys109 is the site of S-palmitoyl cysteine attachment. Position 114 is a phosphoserine (Ser114). 2 positions are modified to phosphothreonine: Thr116 and Thr118. S-palmitoyl cysteine attachment occurs at residues Cys139 and Cys141. Residues 152–178 (FVGITYALTIVWLLVFACSAVPVYIYF) traverse the membrane as a helical segment. The Extracellular segment spans residues 179 to 238 (NTWTTCQSIAFPSKTSASIGSLCADARMYGVLPWNAFPGKVCGSNLLSICKTAEFQMTFH). Intrachain disulfides connect Cys184–Cys228 and Cys201–Cys220. Ser199 carries O-palmitoyl serine lipidation. A helical transmembrane segment spans residues 239 to 268 (LFIAAFVGAAATLVSLLTFMIAATYNFAVL). Residues 269–277 (KLMGRGTKF) lie on the Cytoplasmic side of the membrane.

It belongs to the myelin proteolipid protein family.

It is found in the cell membrane. It localises to the myelin membrane. Its function is as follows. This is the major myelin protein from the central nervous system. It plays an important role in the formation or maintenance of the multilamellar structure of myelin. This chain is Myelin proteolipid protein (PLP1), found in Canis lupus familiaris (Dog).